The primary structure comprises 550 residues: Solute carrier family 22 member 6 (550 aa).

The Cytoplasmic portion of the chain corresponds to 1-9; that stretch reads MAFNDLLQQ. The helical transmembrane segment at 10–30 threads the bilayer; it reads VGGVGRFQQIQVTLVVLPLLL. Topologically, residues 31–135 are extracellular; sequence MASHNTLQNF…LVCSHRALRQ (105 aa). 3 N-linked (GlcNAc...) asparagine glycosylation sites follow: N39, N92, and N113. A helical membrane pass occupies residues 136 to 156; that stretch reads LAQSLYMVGVLLGAMVFGYLA. Over 157–164 the chain is Cytoplasmic; the sequence is DRLGRRKV. Residues 165 to 187 traverse the membrane as a helical segment; it reads LILNYLQTAVSGTCTAFAPNFSI. Topologically, residues 188-195 are extracellular; that stretch reads YCAFRLLS. Residues 196–216 form a helical membrane-spanning segment; the sequence is GMSLAGISLNCMTLNVEWMPI. Topologically, residues 217-224 are cytoplasmic; that stretch reads HTRACVGT. A helical transmembrane segment spans residues 225–245; sequence LIGYVYSLGQFLLAGVAYAVP. Residues 246 to 248 lie on the Extracellular side of the membrane; that stretch reads HWR. The helical transmembrane segment at 249-269 threads the bilayer; it reads HLQLLVSAPFFAFFIYSWFFI. Topologically, residues 270 to 337 are cytoplasmic; it reads ESARWHSSSG…ELLRCPTLRH (68 aa). A helical membrane pass occupies residues 338 to 358; sequence LFLCLSMLWFATSFAYYGLVM. Topologically, residues 359–368 are extracellular; it reads DLQGFGVSIY. A helical membrane pass occupies residues 369 to 389; sequence LIQVIFGAVDLPAKLVGFLVI. Residues 390–395 are Cytoplasmic-facing; that stretch reads NSLGRR. A helical membrane pass occupies residues 396–416; it reads PAQMAALLLAGICILLNGVIP. Residues 417–420 lie on the Extracellular side of the membrane; sequence QDQS. Residues 421-444 traverse the membrane as a helical segment; it reads IVRTSLAVPGKGCLAASFNCIFLY. The Cytoplasmic segment spans residues 445 to 455; that stretch reads TGELYPTMIRQ. Residues 456–475 traverse the membrane as a helical segment; the sequence is TGMGMGSTMARVGSIVSPLV. At 476-484 the chain is on the extracellular side; the sequence is SMTAELYPS. The chain crosses the membrane as a helical span at residues 485 to 505; the sequence is MPLFIYGAVPVAASAVTVLLP. The Cytoplasmic portion of the chain corresponds to 506–550; the sequence is ETLGQPLPDTVQDLESRKGKQTRQQQEHQKYMVPLQASAQEKNGL. Residues 514–550 form a disordered region; that stretch reads DTVQDLESRKGKQTRQQQEHQKYMVPLQASAQEKNGL.

Belongs to the major facilitator (TC 2.A.1) superfamily. Organic cation transporter (TC 2.A.1.19) family. In terms of processing, glycosylated. Glycosylation is necessary for proper targeting of the transporter to the plasma membrane.

Its subcellular location is the cell membrane. The catalysed reaction is prostaglandin F2alpha(out) = prostaglandin F2alpha(in). The enzyme catalyses prostaglandin E2(out) = prostaglandin E2(in). Involved in the renal elimination of endogenous and exogenous organic anions. Functions as organic anion exchanger when the uptake of one molecule of organic anion is coupled with an efflux of one molecule of endogenous dicarboxylic acid (glutarate, ketoglutarate, etc). Mediates the transport of prostaglandin E2 (PGE2) and prostaglandin F2-alpha (PGF2-alpha) and may be involved in their renal excretion. Also mediates the sodium-independent uptake of p-aminohippurate (PAH), 2,3-dimercapto-1-propanesulfonic acid (DMPS), cidofovir, adefovir, 9-(2-phosphonylmethoxyethyl) guanine (PMEG), 9-(2-phosphonylmethoxyethyl) diaminopurine (PMEDAP), ochratoxin (OTA), acyclovir (ACV), 3'-azido-3-'deoxythymidine (AZT), cimetidine (CMD), 2,4-dichloro-phenoxyacetate (2,4-D), hippurate (HA), indoleacetate (IA), indoxyl sulfate (IS) and 3-carboxy-4-methyl-5-propyl-2-furanpropionate (CMPF) and edaravone sulfate. PAH uptake is inhibited by p-chloromercuribenzenesulphonate (PCMBS), diethyl pyrocarbonate (DEPC), indomethacin, sulindac, diclofenac, carprofen, okadaic acid, benzothiazolylcysteine (BTC), S-chlorotrifluoroethylcysteine (CTFC), cysteine S-conjugates S-dichlorovinylcysteine (DCVC), furosemide, steviol, phorbol 12-myristate 13-acetate (PMA), calcium ionophore A23187, benzylpenicillin, bumetamide, losartan, probenecid, phenol red, urate, glutarate and alpha-ketoglutarate. The sequence is that of Solute carrier family 22 member 6 (SLC22A6) from Pongo abelii (Sumatran orangutan).